A 114-amino-acid polypeptide reads, in one-letter code: uncharacterized protein (114 aa).

In terms of biological role, may be associated with transposition functions of transposon Tn903. This is an uncharacterized protein from Escherichia coli.